The sequence spans 191 residues: Fe/S biogenesis protein NfuA (191 aa).

[4Fe-4S] cluster is bound by residues Cys-149 and Cys-152.

This sequence belongs to the NfuA family. Homodimer. [4Fe-4S] cluster serves as cofactor.

Its function is as follows. Involved in iron-sulfur cluster biogenesis. Binds a 4Fe-4S cluster, can transfer this cluster to apoproteins, and thereby intervenes in the maturation of Fe/S proteins. Could also act as a scaffold/chaperone for damaged Fe/S proteins. The chain is Fe/S biogenesis protein NfuA from Salmonella choleraesuis (strain SC-B67).